The chain runs to 123 residues: Photosystem II extrinsic protein U (123 aa).

Positions 1–28 (MKTLARILVVFTLIVGLIGFFNPLPAQA) are cleaved as a signal peptide.

The protein belongs to the PsbU family. In terms of assembly, PSII is composed of 1 copy each of membrane proteins PsbA, PsbB, PsbC, PsbD, PsbE, PsbF, PsbH, PsbI, PsbJ, PsbK, PsbL, PsbM, PsbT, PsbX, PsbY, PsbZ, Psb30/Ycf12, peripheral proteins PsbO, CyanoQ (PsbQ), PsbU, PsbV and a large number of cofactors. It forms dimeric complexes.

It is found in the cellular thylakoid membrane. In terms of biological role, one of the extrinsic, lumenal subunits of photosystem II (PSII). PSII is a light-driven water plastoquinone oxidoreductase, using light energy to abstract electrons from H(2)O, generating a proton gradient subsequently used for ATP formation. The extrinsic proteins stabilize the structure of photosystem II oxygen-evolving complex (OEC), the ion environment of oxygen evolution and protect the OEC against heat-induced inactivation. The sequence is that of Photosystem II extrinsic protein U from Gloeothece citriformis (strain PCC 7424) (Cyanothece sp. (strain PCC 7424)).